Consider the following 572-residue polypeptide: Dihydroxy-acid dehydratase (572 aa).

[2Fe-2S] cluster is bound at residue Cys57. Asp89 lines the Mg(2+) pocket. Position 130 (Cys130) interacts with [2Fe-2S] cluster. Residues Asp131 and Lys132 each contribute to the Mg(2+) site. Lys132 carries the N6-carboxylysine modification. Position 202 (Cys202) interacts with [2Fe-2S] cluster. Glu453 contributes to the Mg(2+) binding site. Catalysis depends on Ser479, which acts as the Proton acceptor.

The protein belongs to the IlvD/Edd family. As to quaternary structure, homodimer. [2Fe-2S] cluster is required as a cofactor. Requires Mg(2+) as cofactor.

The enzyme catalyses (2R)-2,3-dihydroxy-3-methylbutanoate = 3-methyl-2-oxobutanoate + H2O. It catalyses the reaction (2R,3R)-2,3-dihydroxy-3-methylpentanoate = (S)-3-methyl-2-oxopentanoate + H2O. It functions in the pathway amino-acid biosynthesis; L-isoleucine biosynthesis; L-isoleucine from 2-oxobutanoate: step 3/4. It participates in amino-acid biosynthesis; L-valine biosynthesis; L-valine from pyruvate: step 3/4. In terms of biological role, functions in the biosynthesis of branched-chain amino acids. Catalyzes the dehydration of (2R,3R)-2,3-dihydroxy-3-methylpentanoate (2,3-dihydroxy-3-methylvalerate) into 2-oxo-3-methylpentanoate (2-oxo-3-methylvalerate) and of (2R)-2,3-dihydroxy-3-methylbutanoate (2,3-dihydroxyisovalerate) into 2-oxo-3-methylbutanoate (2-oxoisovalerate), the penultimate precursor to L-isoleucine and L-valine, respectively. In Streptococcus thermophilus (strain CNRZ 1066), this protein is Dihydroxy-acid dehydratase.